Reading from the N-terminus, the 335-residue chain is Cathepsin B (335 aa).

Positions 1-17 are cleaved as a signal peptide; sequence MWRLLATLSCLLVLTSA. Residues 18 to 79 constitute a propeptide, activation peptide; that stretch reads RSSLYFPPLS…QRDAFAADVV (62 aa). 6 disulfides stabilise this stretch: Cys93-Cys122, Cys105-Cys150, Cys141-Cys207, Cys142-Cys146, Cys179-Cys211, and Cys187-Cys198. The active site involves Cys108. Asn192 carries an N-linked (GlcNAc...) asparagine glycan. Lys220 carries the post-translational modification N6-acetyllysine. The cysteines at positions 227 and 331 are disulfide-linked. Active-site residues include His278 and Asn298. A propeptide spanning residues 333-335 is cleaved from the precursor; that stretch reads HQY.

It belongs to the peptidase C1 family. As to quaternary structure, dimer of a heavy chain and a light chain cross-linked by a disulfide bond. Interacts with SRPX2. Directly interacts with SHKBP1. As to expression, expressed in myoblasts, the myotube, fibroblasts and fetal muscle (at protein level). Expressed in the spleen (at protein level).

It is found in the lysosome. Its subcellular location is the melanosome. It localises to the secreted. The protein resides in the extracellular space. The protein localises to the apical cell membrane. It catalyses the reaction Hydrolysis of proteins with broad specificity for peptide bonds. Preferentially cleaves -Arg-Arg-|-Xaa bonds in small molecule substrates (thus differing from cathepsin L). In addition to being an endopeptidase, shows peptidyl-dipeptidase activity, liberating C-terminal dipeptides.. Functionally, thiol protease which is believed to participate in intracellular degradation and turnover of proteins. Cleaves matrix extracellular phosphoglycoprotein MEPE. Involved in the solubilization of cross-linked TG/thyroglobulin in the thyroid follicle lumen. Has also been implicated in tumor invasion and metastasis. The polypeptide is Cathepsin B (CTSB) (Bos taurus (Bovine)).